The following is a 713-amino-acid chain: tRNA 5-methylaminomethyl-2-thiouridine biosynthesis bifunctional protein MnmC (713 aa).

The tract at residues 1–300 (MTAEPNKPCQ…MAAILSSATP (300 aa)) is tRNA (mnm(5)s(2)U34)-methyltransferase. The segment at 306–713 (IGGGLASAHL…LRKLLKGKAL (408 aa)) is FAD-dependent cmnm(5)s(2)U34 oxidoreductase.

In the N-terminal section; belongs to the methyltransferase superfamily. tRNA (mnm(5)s(2)U34)-methyltransferase family. It in the C-terminal section; belongs to the DAO family. The cofactor is FAD.

The protein localises to the cytoplasm. It carries out the reaction 5-aminomethyl-2-thiouridine(34) in tRNA + S-adenosyl-L-methionine = 5-methylaminomethyl-2-thiouridine(34) in tRNA + S-adenosyl-L-homocysteine + H(+). Its function is as follows. Catalyzes the last two steps in the biosynthesis of 5-methylaminomethyl-2-thiouridine (mnm(5)s(2)U) at the wobble position (U34) in tRNA. Catalyzes the FAD-dependent demodification of cmnm(5)s(2)U34 to nm(5)s(2)U34, followed by the transfer of a methyl group from S-adenosyl-L-methionine to nm(5)s(2)U34, to form mnm(5)s(2)U34. The sequence is that of tRNA 5-methylaminomethyl-2-thiouridine biosynthesis bifunctional protein MnmC from Shewanella baltica (strain OS155 / ATCC BAA-1091).